A 236-amino-acid polypeptide reads, in one-letter code: Ureidoacrylate amidohydrolase RutB (236 aa).

Residue Asp-24 is the Proton acceptor of the active site. Residue Lys-133 is part of the active site. Residue Cys-166 is the Nucleophile of the active site.

Belongs to the isochorismatase family. RutB subfamily.

The catalysed reaction is (Z)-3-ureidoacrylate + H2O + H(+) = (Z)-3-aminoacrylate + NH4(+) + CO2. It catalyses the reaction (Z)-3-ureidoacrylate + H2O = (Z)-3-aminoacrylate + carbamate + H(+). It carries out the reaction (Z)-2-methylureidoacrylate + H2O + H(+) = (Z)-2-methylaminoacrylate + NH4(+) + CO2. Hydrolyzes ureidoacrylate to form aminoacrylate and carbamate. The carbamate hydrolyzes spontaneously, thereby releasing one of the nitrogen atoms of the pyrimidine ring as ammonia and one of its carbon atoms as CO2. This chain is Ureidoacrylate amidohydrolase RutB, found in Klebsiella variicola (strain At-22).